The sequence spans 470 residues: Neuraminidase (470 aa).

Residues 1-14 (MNPNQKIITIGSIS) lie on the Intravirion side of the membrane. Positions 11–32 (GSISLGLVVFNVLLHVVSIIVT) are involved in apical transport and lipid raft association. The chain crosses the membrane as a helical span at residues 15–35 (LGLVVFNVLLHVVSIIVTVLV). A hypervariable stalk region region spans residues 32-86 (TVLVLGKGGNNGICNETVVREYNETVRIEKVTQWHNTNVVEYVPYWNGGTYMNNT). The Virion surface portion of the chain corresponds to 36 to 470 (LGKGGNNGIC…AILPFDIDKM (435 aa)). N-linked (GlcNAc...) asparagine; by host glycosylation is found at asparagine 46, asparagine 54, and asparagine 84. The interval 89-470 (ICDAKGFAPF…AILPFDIDKM (382 aa)) is head of neuraminidase. 8 disulfide bridges follow: cysteine 90/cysteine 417, cysteine 122/cysteine 127, cysteine 182/cysteine 229, cysteine 231/cysteine 236, cysteine 277/cysteine 290, cysteine 279/cysteine 288, cysteine 316/cysteine 335, and cysteine 421/cysteine 446. Residue arginine 116 coordinates substrate. Asparagine 144 is a glycosylation site (N-linked (GlcNAc...) asparagine; by host). The Proton donor/acceptor role is filled by aspartate 149. Arginine 150 contributes to the substrate binding site. 275–276 (EE) provides a ligand contact to substrate. Residue arginine 291 coordinates substrate. Residues aspartate 292, glycine 296, and aspartate 322 each contribute to the Ca(2+) site. Arginine 368 provides a ligand contact to substrate. Asparagine 398 carries N-linked (GlcNAc...) asparagine; by host glycosylation. Tyrosine 402 (nucleophile) is an active-site residue.

It belongs to the glycosyl hydrolase 34 family. Homotetramer. Ca(2+) is required as a cofactor. In terms of processing, N-glycosylated.

It is found in the virion membrane. The protein localises to the host apical cell membrane. The catalysed reaction is Hydrolysis of alpha-(2-&gt;3)-, alpha-(2-&gt;6)-, alpha-(2-&gt;8)- glycosidic linkages of terminal sialic acid residues in oligosaccharides, glycoproteins, glycolipids, colominic acid and synthetic substrates.. Inhibited by the neuraminidase inhibitors zanamivir (Relenza) and oseltamivir (Tamiflu). These drugs interfere with the release of progeny virus from infected cells and are effective against all influenza strains. Resistance to neuraminidase inhibitors is quite rare. In terms of biological role, catalyzes the removal of terminal sialic acid residues from viral and cellular glycoconjugates. Cleaves off the terminal sialic acids on the glycosylated HA during virus budding to facilitate virus release. Additionally helps virus spread through the circulation by further removing sialic acids from the cell surface. These cleavages prevent self-aggregation and ensure the efficient spread of the progeny virus from cell to cell. Otherwise, infection would be limited to one round of replication. Described as a receptor-destroying enzyme because it cleaves a terminal sialic acid from the cellular receptors. May facilitate viral invasion of the upper airways by cleaving the sialic acid moieties on the mucin of the airway epithelial cells. Likely to plays a role in the budding process through its association with lipid rafts during intracellular transport. May additionally display a raft-association independent effect on budding. Plays a role in the determination of host range restriction on replication and virulence. Sialidase activity in late endosome/lysosome traffic seems to enhance virus replication. This chain is Neuraminidase, found in Influenza A virus (strain A/Duck/Ukraine/1/1963 H3N8).